A 234-amino-acid polypeptide reads, in one-letter code: Sugar fermentation stimulation protein homolog (234 aa).

It belongs to the SfsA family.

The chain is Sugar fermentation stimulation protein homolog from Bartonella quintana (strain Toulouse) (Rochalimaea quintana).